The sequence spans 23 residues: Protein YsaE (23 aa).

The polypeptide is Protein YsaE (Escherichia coli (strain K12)).